Here is a 551-residue protein sequence, read N- to C-terminus: Rqc2 homolog RqcH (551 aa).

It belongs to the NEMF family. Associates with stalled 50S ribosomal subunits, binds to RqcP. Interacts with human fibronectin.

It localises to the secreted. The protein localises to the capsule. It is found in the cell surface. Its subcellular location is the cytoplasm. Functionally, key component of the ribosome quality control system (RQC), a ribosome-associated complex that mediates the extraction of incompletely synthesized nascent chains from stalled ribosomes and their subsequent degradation. RqcH recruits Ala-charged tRNA, and with RqcP directs the elongation of stalled nascent chains on 50S ribosomal subunits, leading to non-templated C-terminal alanine extensions (Ala tail). The Ala tail promotes nascent chain degradation. May add between 1 and at least 8 Ala residues. Binds to stalled 50S ribosomal subunits. Its function is as follows. Plays a significant role in virulence. Recombinant protein binds to immobilized human fibronectin; binding is saturable and competed by heparin. Purified protein inhibits binding of whole cells to fibronectin. In Streptococcus pneumoniae serotype 2 (strain D39 / NCTC 7466), this protein is Rqc2 homolog RqcH.